The primary structure comprises 341 residues: N-acetyl-gamma-glutamyl-phosphate reductase (341 aa).

Residue C147 is part of the active site.

This sequence belongs to the NAGSA dehydrogenase family. Type 1 subfamily.

It is found in the cytoplasm. It catalyses the reaction N-acetyl-L-glutamate 5-semialdehyde + phosphate + NADP(+) = N-acetyl-L-glutamyl 5-phosphate + NADPH + H(+). Its pathway is amino-acid biosynthesis; L-arginine biosynthesis; N(2)-acetyl-L-ornithine from L-glutamate: step 3/4. Functionally, catalyzes the NADPH-dependent reduction of N-acetyl-5-glutamyl phosphate to yield N-acetyl-L-glutamate 5-semialdehyde. The protein is N-acetyl-gamma-glutamyl-phosphate reductase of Dehalococcoides mccartyi (strain CBDB1).